Here is a 107-residue protein sequence, read N- to C-terminus: Phosphoribosyl-ATP pyrophosphatase 1 (107 aa).

It belongs to the PRA-PH family.

The protein resides in the cytoplasm. The enzyme catalyses 1-(5-phospho-beta-D-ribosyl)-ATP + H2O = 1-(5-phospho-beta-D-ribosyl)-5'-AMP + diphosphate + H(+). Its pathway is amino-acid biosynthesis; L-histidine biosynthesis; L-histidine from 5-phospho-alpha-D-ribose 1-diphosphate: step 2/9. This is Phosphoribosyl-ATP pyrophosphatase 1 (hisE1) from Rhodopseudomonas palustris (strain ATCC BAA-98 / CGA009).